We begin with the raw amino-acid sequence, 214 residues long: Alpha-S1-casein (214 aa).

The first 15 residues, 1 to 15 (MKLLILTCLVAVALA), serve as a signal peptide directing secretion. A phosphoserine mark is found at serine 63, serine 79, serine 81, serine 82, serine 83, and serine 90. 2 consecutive repeats follow at residues 85–99 (EIVP…IQKE) and 125–140 (EIVP…SMKE).

Belongs to the alpha-casein family. Mammary gland specific. Secreted in milk.

It is found in the secreted. Its function is as follows. Important role in the capacity of milk to transport calcium phosphate. This is Alpha-S1-casein (CSN1S1) from Bubalus bubalis (Domestic water buffalo).